The following is a 282-amino-acid chain: Acetyl-coenzyme A carboxylase carboxyl transferase subunit beta 1 (282 aa).

Residues 23-282 enclose the CoA carboxyltransferase N-terminal domain; it reads LMTKCPECRH…MHTKGGVQHV (260 aa). Zn(2+)-binding residues include Cys27, Cys30, Cys46, and Cys49. The C4-type zinc finger occupies 27–49; that stretch reads CPECRHILLTKELEKNHKVCTKC.

Belongs to the AccD/PCCB family. In terms of assembly, acetyl-CoA carboxylase is a heterohexamer composed of biotin carboxyl carrier protein (AccB), biotin carboxylase (AccC) and two subunits each of ACCase subunit alpha (AccA) and ACCase subunit beta (AccD). The cofactor is Zn(2+).

Its subcellular location is the cytoplasm. It catalyses the reaction N(6)-carboxybiotinyl-L-lysyl-[protein] + acetyl-CoA = N(6)-biotinyl-L-lysyl-[protein] + malonyl-CoA. Its pathway is lipid metabolism; malonyl-CoA biosynthesis; malonyl-CoA from acetyl-CoA: step 1/1. Its function is as follows. Component of the acetyl coenzyme A carboxylase (ACC) complex. Biotin carboxylase (BC) catalyzes the carboxylation of biotin on its carrier protein (BCCP) and then the CO(2) group is transferred by the transcarboxylase to acetyl-CoA to form malonyl-CoA. The chain is Acetyl-coenzyme A carboxylase carboxyl transferase subunit beta 1 from Lysinibacillus sphaericus (strain C3-41).